A 137-amino-acid chain; its full sequence is Large ribosomal subunit protein uL16 (137 aa).

The protein belongs to the universal ribosomal protein uL16 family. In terms of assembly, part of the 50S ribosomal subunit.

In terms of biological role, binds 23S rRNA and is also seen to make contacts with the A and possibly P site tRNAs. The sequence is that of Large ribosomal subunit protein uL16 from Paracoccus denitrificans (strain Pd 1222).